We begin with the raw amino-acid sequence, 518 residues long: D-aminopeptidase (518 aa).

S62 (nucleophile) is an active-site residue. The active-site Proton donor/acceptor is K65. Residues 373 to 392 (FGTGPEKMDISGENEAQSSM) form a disordered region. The important for specificity stretch occupies residues 477-487 (QRSMDAPSPGE). D481 serves as a coordination point for substrate.

It belongs to the peptidase S12 family. In terms of assembly, homodimer.

It carries out the reaction Release of an N-terminal D-amino acid from a peptide, Xaa-|-Yaa-, in which Xaa is preferably D-Ala, D-Ser or D-Thr. D-amino acid amides and methyl esters also are hydrolyzed, as is glycine amide.. With respect to regulation, inhibited by beta-lactam compounds such as 6-aminopenicillic acid, 7-aminocephalosporanic acid, benzylpenicillin and ampicillin. Inhibited by p-chloromercuribenzoate. In terms of biological role, hydrolyzes N-terminal residues in D-amino acid-containing peptides. The polypeptide is D-aminopeptidase (Brucella melitensis biotype 1 (strain ATCC 23456 / CCUG 17765 / NCTC 10094 / 16M)).